Here is a 274-residue protein sequence, read N- to C-terminus: Nitrogenase iron protein (274 aa).

8 to 15 (GKGGIGKS) contacts ATP. A [4Fe-4S] cluster-binding site is contributed by C94. R97 carries the post-translational modification ADP-ribosylarginine; by dinitrogenase reductase ADP-ribosyltransferase. C131 contacts [4Fe-4S] cluster.

It belongs to the NifH/BchL/ChlL family. In terms of assembly, homodimer. Requires [4Fe-4S] cluster as cofactor. The reversible ADP-ribosylation of Arg-97 inactivates the nitrogenase reductase and regulates nitrogenase activity.

It catalyses the reaction N2 + 8 reduced [2Fe-2S]-[ferredoxin] + 16 ATP + 16 H2O = H2 + 8 oxidized [2Fe-2S]-[ferredoxin] + 2 NH4(+) + 16 ADP + 16 phosphate + 6 H(+). The key enzymatic reactions in nitrogen fixation are catalyzed by the nitrogenase complex, which has 2 components: the iron protein and the molybdenum-iron protein. This is Nitrogenase iron protein from Desulfatibacillum aliphaticivorans.